A 174-amino-acid polypeptide reads, in one-letter code: Shikimate kinase 2 (174 aa).

12-17 (GAGKTT) provides a ligand contact to ATP. Mg(2+) contacts are provided by threonine 16 and aspartate 32. Substrate is bound by residues aspartate 34, arginine 58, and glycine 79. The LID domain stretch occupies residues 112–126 (AEDPEEAQRPSLTGK). Arginine 120 contributes to the ATP binding site. Arginine 139 contributes to the substrate binding site. ATP is bound at residue glutamine 155.

Belongs to the shikimate kinase family. AroL subfamily. Monomer. Requires Mg(2+) as cofactor.

The protein localises to the cytoplasm. It catalyses the reaction shikimate + ATP = 3-phosphoshikimate + ADP + H(+). Its pathway is metabolic intermediate biosynthesis; chorismate biosynthesis; chorismate from D-erythrose 4-phosphate and phosphoenolpyruvate: step 5/7. In terms of biological role, catalyzes the specific phosphorylation of the 3-hydroxyl group of shikimic acid using ATP as a cosubstrate. In Yersinia pseudotuberculosis serotype IB (strain PB1/+), this protein is Shikimate kinase 2.